Consider the following 70-residue polypeptide: Large ribosomal subunit protein bL31 (70 aa).

Residues C16, C18, C37, and C40 each coordinate Zn(2+).

Belongs to the bacterial ribosomal protein bL31 family. Type A subfamily. In terms of assembly, part of the 50S ribosomal subunit. It depends on Zn(2+) as a cofactor.

Its function is as follows. Binds the 23S rRNA. This chain is Large ribosomal subunit protein bL31, found in Alteromonas mediterranea (strain DSM 17117 / CIP 110805 / LMG 28347 / Deep ecotype).